Consider the following 326-residue polypeptide: MSEFPFFSPQPLFSYMMNKNSRVHTDSNIRNTFFTEIGIGILANSFLLLFHIFKFIRGQRSRLTDLPIGLLSLIHLLMLLMGAFIAIDIFISWRGWDDIICKFLVYLYRSFRGLSLCTTCMLSVLQAITLSPRSSCLAKFKHKSPHHVSCAIISLSILYMFISSHLLVSINATPNLTTNNFMQVTQSCYIIPLSYLMQSMFSTLLAIRDISLISLMVLSTCYMVVLLCRHRNQIQHLQGTNLSPKASPEQRATQTILMLMTFFVLMSIFDSIVSCSRTMYLNDPTSYYIQIFVVYIYATVSPFVFMSTEKHIVNFLKSMCVRVKNV.

The Extracellular portion of the chain corresponds to 1–32; the sequence is MSEFPFFSPQPLFSYMMNKNSRVHTDSNIRNT. Residues 33 to 53 traverse the membrane as a helical segment; sequence FFTEIGIGILANSFLLLFHIF. The Cytoplasmic portion of the chain corresponds to 54–70; that stretch reads KFIRGQRSRLTDLPIGL. A helical membrane pass occupies residues 71–91; sequence LSLIHLLMLLMGAFIAIDIFI. At 92–104 the chain is on the extracellular side; the sequence is SWRGWDDIICKFL. Cysteine 101 and cysteine 188 are oxidised to a cystine. The helical transmembrane segment at 105-127 threads the bilayer; that stretch reads VYLYRSFRGLSLCTTCMLSVLQA. The Cytoplasmic segment spans residues 128–149; the sequence is ITLSPRSSCLAKFKHKSPHHVS. The helical transmembrane segment at 150 to 170 threads the bilayer; sequence CAIISLSILYMFISSHLLVSI. Residues 171–209 lie on the Extracellular side of the membrane; that stretch reads NATPNLTTNNFMQVTQSCYIIPLSYLMQSMFSTLLAIRD. An N-linked (GlcNAc...) asparagine glycan is attached at asparagine 175. Residues 210–230 form a helical membrane-spanning segment; sequence ISLISLMVLSTCYMVVLLCRH. Topologically, residues 231–254 are cytoplasmic; it reads RNQIQHLQGTNLSPKASPEQRATQ. Residues 255 to 275 traverse the membrane as a helical segment; the sequence is TILMLMTFFVLMSIFDSIVSC. The Extracellular segment spans residues 276 to 285; it reads SRTMYLNDPT. The chain crosses the membrane as a helical span at residues 286-306; sequence SYYIQIFVVYIYATVSPFVFM. Residues 307–326 are Cytoplasmic-facing; the sequence is STEKHIVNFLKSMCVRVKNV.

The protein belongs to the G-protein coupled receptor 1 family. As to expression, expressed in 1-4% of neurons of the vomeronasal organ. Only one pheromone receptor gene may be expressed in a particular neuron. Not expressed in the main olfactory epithelium.

The protein localises to the cell membrane. In terms of biological role, putative pheromone receptor implicated in the regulation of social as well as reproductive behavior. The chain is Vomeronasal type-1 receptor 100 (Vom1r100) from Rattus norvegicus (Rat).